A 612-amino-acid polypeptide reads, in one-letter code: Dihydroxy-acid dehydratase (612 aa).

Aspartate 81 is a binding site for Mg(2+). Residue cysteine 122 participates in [2Fe-2S] cluster binding. 2 residues coordinate Mg(2+): aspartate 123 and lysine 124. At lysine 124 the chain carries N6-carboxylysine. Cysteine 195 provides a ligand contact to [2Fe-2S] cluster. Residue glutamate 491 participates in Mg(2+) binding. Serine 517 functions as the Proton acceptor in the catalytic mechanism.

This sequence belongs to the IlvD/Edd family. As to quaternary structure, homodimer. It depends on [2Fe-2S] cluster as a cofactor. The cofactor is Mg(2+).

It carries out the reaction (2R)-2,3-dihydroxy-3-methylbutanoate = 3-methyl-2-oxobutanoate + H2O. It catalyses the reaction (2R,3R)-2,3-dihydroxy-3-methylpentanoate = (S)-3-methyl-2-oxopentanoate + H2O. The protein operates within amino-acid biosynthesis; L-isoleucine biosynthesis; L-isoleucine from 2-oxobutanoate: step 3/4. Its pathway is amino-acid biosynthesis; L-valine biosynthesis; L-valine from pyruvate: step 3/4. In terms of biological role, functions in the biosynthesis of branched-chain amino acids. Catalyzes the dehydration of (2R,3R)-2,3-dihydroxy-3-methylpentanoate (2,3-dihydroxy-3-methylvalerate) into 2-oxo-3-methylpentanoate (2-oxo-3-methylvalerate) and of (2R)-2,3-dihydroxy-3-methylbutanoate (2,3-dihydroxyisovalerate) into 2-oxo-3-methylbutanoate (2-oxoisovalerate), the penultimate precursor to L-isoleucine and L-valine, respectively. This Bartonella henselae (strain ATCC 49882 / DSM 28221 / CCUG 30454 / Houston 1) (Rochalimaea henselae) protein is Dihydroxy-acid dehydratase.